A 102-amino-acid polypeptide reads, in one-letter code: Putative peripheral benzodiazepine receptor-related protein (102 aa).

Ubiquitous.

In Homo sapiens (Human), this protein is Putative peripheral benzodiazepine receptor-related protein (TSPO).